A 451-amino-acid polypeptide reads, in one-letter code: D-inositol 3-phosphate glycosyltransferase (451 aa).

A 1D-myo-inositol 3-phosphate-binding site is contributed by H21. UDP-N-acetyl-alpha-D-glucosamine is bound by residues 27 to 28 and G35; that span reads QP. 1D-myo-inositol 3-phosphate is bound by residues 32–37, K90, Y123, T147, and R167; that span reads DAGGMN. The UDP-N-acetyl-alpha-D-glucosamine site is built by R241, K246, and Q305. Mg(2+)-binding residues include Y314, R315, and A317. Residues E327 and E335 each coordinate UDP-N-acetyl-alpha-D-glucosamine. Residue T341 participates in Mg(2+) binding.

Belongs to the glycosyltransferase group 1 family. MshA subfamily. As to quaternary structure, homodimer.

It catalyses the reaction 1D-myo-inositol 3-phosphate + UDP-N-acetyl-alpha-D-glucosamine = 1D-myo-inositol 2-acetamido-2-deoxy-alpha-D-glucopyranoside 3-phosphate + UDP + H(+). Catalyzes the transfer of a N-acetyl-glucosamine moiety to 1D-myo-inositol 3-phosphate to produce 1D-myo-inositol 2-acetamido-2-deoxy-glucopyranoside 3-phosphate in the mycothiol biosynthesis pathway. The polypeptide is D-inositol 3-phosphate glycosyltransferase (Nocardia farcinica (strain IFM 10152)).